The chain runs to 240 residues: Late expression factor 5 homolog (240 aa).

The protein belongs to the baculoviridae LEF-5 family.

In terms of biological role, required for late and very late gene expression. The protein is Late expression factor 5 homolog of Tortricidae (ClGV).